The primary structure comprises 483 residues: MPVSDFQVVLGLEVHAQLLTRSKIFCACPTEFGGAPNTHVCPVCLGLPGALPALNAAVVEMAIRTGLALGCEIQRRSVFARKNYFYPDLPKGYQISQYELPICSGGGVDIAVGGEARRIRLTRIHMEEDAGKNVHDVTAAGSGVDLNRAGVPLLEIVSEPDLRSIDEAIAYLKSLRAILMALGVNDGNLQEGSFRCDANVSVMPRGATRLGTRCELKNMNSFRFLRQAIDYEVRRQVELIESGGKVDQETRLFDPDRGETRSMRSKEEAHDYRYFPEPDLPPVLVDEALVERIRRELPELPRARSARYQRDLGLSAQDAELLVSDKGIGDFFDATLAAYGASPDAAKRIANLLNGDVARLANELSLEPAAWRIAPAQLAAILRLQDAQTIGGPGAKQVVEEVFRSGAEPAEVVREKGLAQVSDEGALEAAVDRVLAASAGEVERYRGGNKKLLGFFVGQVMKETRGKGNPAVVNALLKRKLGG.

This sequence belongs to the GatB/GatE family. GatB subfamily. Heterotrimer of A, B and C subunits.

It carries out the reaction L-glutamyl-tRNA(Gln) + L-glutamine + ATP + H2O = L-glutaminyl-tRNA(Gln) + L-glutamate + ADP + phosphate + H(+). The enzyme catalyses L-aspartyl-tRNA(Asn) + L-glutamine + ATP + H2O = L-asparaginyl-tRNA(Asn) + L-glutamate + ADP + phosphate + 2 H(+). In terms of biological role, allows the formation of correctly charged Asn-tRNA(Asn) or Gln-tRNA(Gln) through the transamidation of misacylated Asp-tRNA(Asn) or Glu-tRNA(Gln) in organisms which lack either or both of asparaginyl-tRNA or glutaminyl-tRNA synthetases. The reaction takes place in the presence of glutamine and ATP through an activated phospho-Asp-tRNA(Asn) or phospho-Glu-tRNA(Gln). This chain is Aspartyl/glutamyl-tRNA(Asn/Gln) amidotransferase subunit B, found in Anaeromyxobacter sp. (strain Fw109-5).